Consider the following 153-residue polypeptide: Nucleoside diphosphate kinase (153 aa).

ATP contacts are provided by K13, F61, R89, T95, R106, and N116. Catalysis depends on H119, which acts as the Pros-phosphohistidine intermediate.

It belongs to the NDK family. Mg(2+) serves as cofactor. Highest levels in the liver and kidney with lower levels in the heart, brain and breast muscle.

It localises to the cytoplasm. Its subcellular location is the cell membrane. It carries out the reaction a 2'-deoxyribonucleoside 5'-diphosphate + ATP = a 2'-deoxyribonucleoside 5'-triphosphate + ADP. The catalysed reaction is a ribonucleoside 5'-diphosphate + ATP = a ribonucleoside 5'-triphosphate + ADP. Functionally, major role in the synthesis of nucleoside triphosphates other than ATP. The ATP gamma phosphate is transferred to the NDP beta phosphate via a ping-pong mechanism, using a phosphorylated active-site intermediate. The protein is Nucleoside diphosphate kinase of Columba livia (Rock dove).